A 354-amino-acid chain; its full sequence is Glutamine synthetase (354 aa).

In terms of domain architecture, GS beta-grasp spans 22–101 (FHAEYVWIDG…VLSETYNNDG (80 aa)). In terms of domain architecture, GS catalytic spans 108–354 (HRHHTAKVME…IIIETTILDK (247 aa)).

The protein belongs to the glutamine synthetase family. Homooctamer.

It is found in the cytoplasm. It carries out the reaction L-glutamate + NH4(+) + ATP = L-glutamine + ADP + phosphate + H(+). The protein is Glutamine synthetase (GLN1) of Amanita muscaria (Fly agaric).